We begin with the raw amino-acid sequence, 274 residues long: 2,3,4,5-tetrahydropyridine-2,6-dicarboxylate N-succinyltransferase (274 aa).

Residues R104 and D141 each contribute to the substrate site.

It belongs to the transferase hexapeptide repeat family. As to quaternary structure, homotrimer.

It is found in the cytoplasm. The catalysed reaction is (S)-2,3,4,5-tetrahydrodipicolinate + succinyl-CoA + H2O = (S)-2-succinylamino-6-oxoheptanedioate + CoA. Its pathway is amino-acid biosynthesis; L-lysine biosynthesis via DAP pathway; LL-2,6-diaminopimelate from (S)-tetrahydrodipicolinate (succinylase route): step 1/3. The protein is 2,3,4,5-tetrahydropyridine-2,6-dicarboxylate N-succinyltransferase of Shewanella pealeana (strain ATCC 700345 / ANG-SQ1).